A 746-amino-acid polypeptide reads, in one-letter code: Stromal interaction molecule 2 (746 aa).

An N-terminal signal peptide occupies residues 1-14; that stretch reads MLVLGLLVAGAADG. At 15–218 the chain is on the extracellular side; sequence CELVPRHLRG…RPPHNWMKDF (204 aa). Residues 67–102 enclose the EF-hand domain; it reads FSLEALQTIHKQMDDDKDGGIEVEESDEFIREDMKY. Residues Asp80, Asp82, Asp84, and Glu91 each contribute to the Ca(2+) site. Asn135 carries N-linked (GlcNAc...) asparagine glycosylation. Residues 136–204 form the SAM domain; that stretch reads WTLEDTLQWL…QLKALDVVLF (69 aa). The helical transmembrane segment at 219 to 235 threads the bilayer; sequence ILTVSIVIGVGGCWFAY. Over 236-746 the chain is Cytoplasmic; the sequence is TQNKTSKEHV…IKSLFKKKSK (511 aa). Residues 247–394 are a coiled coil; sequence KMMKDLESLQ…EKIKKKRSTV (148 aa). The disordered stretch occupies residues 483–562; the sequence is DLDEDTPPIV…SLPSPDPDIL (80 aa). Ser523 carries the post-translational modification Phosphoserine. Basic residues predominate over residues 537-549; that stretch reads HPSHPRHPHHPQH. Phosphoserine occurs at positions 609, 621, 640, 650, 661, 665, 680, and 697. A disordered region spans residues 685-746; the sequence is SSGIPVPKPR…IKSLFKKKSK (62 aa). The span at 723–732 shows a compositional bias: basic and acidic residues; that stretch reads DLCHNGEKSK. Basic residues predominate over residues 733-746; that stretch reads KPSKIKSLFKKKSK.

In terms of assembly, oligomer with STIM1. Interacts with ORAI1. Post-translationally, glycosylated. Phosphorylated predominantly on Ser residues. As to expression, expressed in all tissues and tumor cell lines examined.

It is found in the endoplasmic reticulum membrane. Plays a role in mediating store-operated Ca(2+) entry (SOCE), a Ca(2+) influx following depletion of intracellular Ca(2+) stores. Functions as a highly sensitive Ca(2+) sensor in the endoplasmic reticulum which activates both store-operated and store-independent Ca(2+)-influx. Regulates basal cytosolic and endoplasmic reticulum Ca(2+) concentrations. Upon mild variations of the endoplasmic reticulum Ca(2+) concentration, translocates from the endoplasmic reticulum to the plasma membrane where it probably activates the Ca(2+) release-activated Ca(2+) (CRAC) channels ORAI1, ORAI2 and ORAI3. May inhibit STIM1-mediated Ca(2+) influx. This is Stromal interaction molecule 2 (STIM2) from Homo sapiens (Human).